The sequence spans 361 residues: Diacylglycerol O-acyltransferase 2 (361 aa).

At M1–Q42 the chain is on the cytoplasmic side. Residues I43–T61 form a helical membrane-spanning segment. Residues A62–V65 are Lumenal-facing. Residues Y66 to L85 form a helical membrane-spanning segment. Residues D86–V361 lie on the Cytoplasmic side of the membrane.

Belongs to the diacylglycerol acyltransferase family.

It is found in the endoplasmic reticulum membrane. The protein localises to the lipid droplet. Its subcellular location is the cytoplasm. The protein resides in the perinuclear region. The catalysed reaction is an acyl-CoA + a 1,2-diacyl-sn-glycerol = a triacyl-sn-glycerol + CoA. The enzyme catalyses all-trans-retinol + an acyl-CoA = an all-trans-retinyl ester + CoA. It carries out the reaction 2-(9Z-octadecenoyl)-glycerol + (9Z)-octadecenoyl-CoA = 1,2-di-(9Z-octadecenoyl)-sn-glycerol + CoA. It catalyses the reaction 1,2-di-(9Z-octadecenoyl)-sn-glycerol + (9Z)-octadecenoyl-CoA = 1,2,3-tri-(9Z-octadecenoyl)-glycerol + CoA. The catalysed reaction is all-trans-retinol + hexadecanoyl-CoA = all-trans-retinyl hexadecanoate + CoA. The enzyme catalyses 1-O-(9Z-octadecenyl)-glycerol + (9Z)-octadecenoyl-CoA = 1-O-(9Z-octadecyl)-3-(9Z-octadecenoyl)-glycerol + CoA. It carries out the reaction 1-(9Z-octadecenoyl)-glycerol + (9Z)-octadecenoyl-CoA = 1,2-di-(9Z-octadecenoyl)-glycerol + CoA. It catalyses the reaction 1,2-di-(9Z-octadecenoyl)-sn-glycerol + hexadecanoyl-CoA = 1,2-di-(9Z)-octadecenoyl-3-hexadecanoyl-sn-glycerol + CoA. The catalysed reaction is 1,3-di-(9Z-octadecenoyl)-glycerol + (9Z)-octadecenoyl-CoA = 1,2,3-tri-(9Z-octadecenoyl)-glycerol + CoA. The enzyme catalyses 2,3-di-(9Z)-octadecenoyl-sn-glycerol + (9Z)-octadecenoyl-CoA = 1,2,3-tri-(9Z-octadecenoyl)-glycerol + CoA. It carries out the reaction 2-(9Z-octadecenoyl)-glycerol + hexadecanoyl-CoA = 1-hexadecanoyl-2-(9Z-octadecenoyl)-sn-glycerol + CoA. The protein operates within glycerolipid metabolism; triacylglycerol biosynthesis. In terms of biological role, essential acyltransferase that catalyzes the terminal and only committed step in triacylglycerol synthesis by using diacylglycerol and fatty acyl CoA as substrates. Required for synthesis and storage of intracellular triglycerides. Probably plays a central role in cytosolic lipid accumulation. This is Diacylglycerol O-acyltransferase 2 (dgat2) from Xenopus tropicalis (Western clawed frog).